Consider the following 292-residue polypeptide: Cyclin-dependent kinase 5 homolog (292 aa).

One can recognise a Protein kinase domain in the interval 4-285 (YSKIEKLGEG…AAAALKHPYF (282 aa)). ATP contacts are provided by residues 10–18 (LGEGTYGIV) and K33. Position 14 is a phosphothreonine (T14). Y15 carries the post-translational modification Phosphotyrosine. D126 (proton acceptor) is an active-site residue.

It belongs to the protein kinase superfamily. CMGC Ser/Thr protein kinase family. CDC2/CDKX subfamily.

It catalyses the reaction L-seryl-[protein] + ATP = O-phospho-L-seryl-[protein] + ADP + H(+). The enzyme catalyses L-threonyl-[protein] + ATP = O-phospho-L-threonyl-[protein] + ADP + H(+). Phosphorylation at Thr-14 or Tyr-15 inactivates the enzyme. The polypeptide is Cyclin-dependent kinase 5 homolog (cdk5) (Dictyostelium discoideum (Social amoeba)).